Consider the following 323-residue polypeptide: tRNA U34 carboxymethyltransferase (323 aa).

Carboxy-S-adenosyl-L-methionine contacts are provided by residues K91, W105, K110, G130, 152–154 (DPS), 181–182 (IE), M196, Y200, and R315.

It belongs to the class I-like SAM-binding methyltransferase superfamily. CmoB family. In terms of assembly, homotetramer.

The enzyme catalyses carboxy-S-adenosyl-L-methionine + 5-hydroxyuridine(34) in tRNA = 5-carboxymethoxyuridine(34) in tRNA + S-adenosyl-L-homocysteine + H(+). Its function is as follows. Catalyzes carboxymethyl transfer from carboxy-S-adenosyl-L-methionine (Cx-SAM) to 5-hydroxyuridine (ho5U) to form 5-carboxymethoxyuridine (cmo5U) at position 34 in tRNAs. The sequence is that of tRNA U34 carboxymethyltransferase from Vibrio atlanticus (strain LGP32) (Vibrio splendidus (strain Mel32)).